A 435-amino-acid polypeptide reads, in one-letter code: GTPase Der (435 aa).

2 EngA-type G domains span residues 4–167 and 175–350; these read GIVA…PSHE and TRVS…TALD. GTP-binding positions include 10–17, 57–61, 119–122, 181–188, 228–232, and 293–296; these read GRPNVGKS, DTGGI, NKYD, DTAGI, and NKWD. In terms of domain architecture, KH-like spans 351 to 435; sequence KKIKTSVFNE…PMSIIFRERK (85 aa).

Belongs to the TRAFAC class TrmE-Era-EngA-EngB-Septin-like GTPase superfamily. EngA (Der) GTPase family. As to quaternary structure, associates with the 50S ribosomal subunit.

In terms of biological role, GTPase that plays an essential role in the late steps of ribosome biogenesis. This is GTPase Der from Mesoplasma florum (strain ATCC 33453 / NBRC 100688 / NCTC 11704 / L1) (Acholeplasma florum).